A 462-amino-acid chain; its full sequence is Fumarate hydratase class II (462 aa).

Substrate-binding positions include 98–100 (SGT), Arg126, 129–132 (HPND), 139–141 (SSN), and Thr187. The disordered stretch occupies residues 120–141 (GTRGKGRKVHPNDHVNKGQSSN). His188 serves as the catalytic Proton donor/acceptor. Ser318 is a catalytic residue. Residues Ser319 and 324 to 326 (KVN) each bind substrate.

This sequence belongs to the class-II fumarase/aspartase family. Fumarase subfamily. As to quaternary structure, homotetramer.

It is found in the cytoplasm. It catalyses the reaction (S)-malate = fumarate + H2O. It functions in the pathway carbohydrate metabolism; tricarboxylic acid cycle; (S)-malate from fumarate: step 1/1. In terms of biological role, involved in the TCA cycle. Catalyzes the stereospecific interconversion of fumarate to L-malate. The protein is Fumarate hydratase class II of Nitrosomonas europaea (strain ATCC 19718 / CIP 103999 / KCTC 2705 / NBRC 14298).